A 255-amino-acid polypeptide reads, in one-letter code: Triosephosphate isomerase (255 aa).

9-11 (NWK) contributes to the substrate binding site. The active-site Electrophile is histidine 95. Residue glutamate 167 is the Proton acceptor of the active site. Residues glycine 173, serine 212, and 233–234 (GG) contribute to the substrate site.

Belongs to the triosephosphate isomerase family. In terms of assembly, homodimer.

The protein localises to the cytoplasm. It carries out the reaction D-glyceraldehyde 3-phosphate = dihydroxyacetone phosphate. It participates in carbohydrate biosynthesis; gluconeogenesis. The protein operates within carbohydrate degradation; glycolysis; D-glyceraldehyde 3-phosphate from glycerone phosphate: step 1/1. Involved in the gluconeogenesis. Catalyzes stereospecifically the conversion of dihydroxyacetone phosphate (DHAP) to D-glyceraldehyde-3-phosphate (G3P). The sequence is that of Triosephosphate isomerase from Yersinia pseudotuberculosis serotype O:1b (strain IP 31758).